A 564-amino-acid chain; its full sequence is Homeobox protein unc-62 (564 aa).

5 disordered regions span residues 40–59 (NEQF…ADPA), 216–270 (ERAS…VMGG), 293–313 (SSSS…LHST), 328–397 (PSTC…KVPK), and 455–503 (IDQN…PSSL). In terms of domain architecture, MEIS N-terminal spans 133–218 (SSDVCSSASF…PLDIVGDERA (86 aa)). Positions 219-230 (SSSQPPMSPGSM) are enriched in low complexity. Polar residues-rich tracts occupy residues 328-344 (PSTC…TPLS) and 381-390 (LSDSANGSQN). The homeobox; TALE-type DNA-binding region spans 392-454 (KRKVPKVFSK…NARRRIVQPM (63 aa)). Composition is skewed to polar residues over residues 455 to 469 (IDQN…QMNV) and 494 to 503 (ANYSPDPSSL).

This sequence belongs to the TALE/MEIS homeobox family. In terms of assembly, forms a heterodimer with homeobox ceh-60.

The protein localises to the nucleus. Functionally, acts redundantly with ceh-20 and ceh-40 to perform overlapping roles during embryogenesis. Required for postembryonic development of the ectoderm, including the Q, V and P cell lineages, playing a crucial role in ensuring that these cells and their descendants undergo their invariant patterns of cell division, migration, fusion and morphogenesis. Has a role in the mig-13 pathway to promote anterior migration of neuroblasts in the Q lineage. Required for multiple roles in regulating vulva development. Associates with homeobox ceh-60 to regulate gene expression, including repression of genes involved in innate immunity and activation of genes involved in vitellogenesis. Involved in lipid homeostasis, contributing to the formation of the cuticle. This is Homeobox protein unc-62 (unc-62) from Caenorhabditis elegans.